Reading from the N-terminus, the 195-residue chain is MTPTLLSAFWTYTLITAMTPGPNNILALSSATSHGFRQSTRVLAGMSLGFLIVMLLCAGISFSLAVIDPAAVHLLSWAGAAYIVWLAWKIATSPTKEDGLQAKPISFWASFALQFVNVKIILYGVTALSTFVLPQTQALSWVVGVSVLLAMIGTFGNVCWALAGHLFQRLFRQYGRQLNIVLALLLIYCAVRIFY.

Over 1-7 the chain is Periplasmic; sequence MTPTLLS. The helical transmembrane segment at 8 to 28 threads the bilayer; it reads AFWTYTLITAMTPGPNNILAL. Over 29–46 the chain is Cytoplasmic; the sequence is SSATSHGFRQSTRVLAGM. The chain crosses the membrane as a helical span at residues 47–67; sequence SLGFLIVMLLCAGISFSLAVI. The Periplasmic segment spans residues 68-69; sequence DP. A helical membrane pass occupies residues 70–90; the sequence is AAVHLLSWAGAAYIVWLAWKI. The Cytoplasmic segment spans residues 91–104; it reads ATSPTKEDGLQAKP. Residues 105–125 traverse the membrane as a helical segment; it reads ISFWASFALQFVNVKIILYGV. Residues 126–141 lie on the Periplasmic side of the membrane; the sequence is TALSTFVLPQTQALSW. Residues 142 to 162 form a helical membrane-spanning segment; it reads VVGVSVLLAMIGTFGNVCWAL. Over 163-176 the chain is Cytoplasmic; sequence AGHLFQRLFRQYGR. Residues 177-194 form a helical membrane-spanning segment; the sequence is QLNIVLALLLIYCAVRIF. Residue Tyr-195 is a topological domain, periplasmic.

It belongs to the Rht family.

It is found in the cell inner membrane. It carries out the reaction O-acetyl-L-serine(in) = O-acetyl-L-serine(out). It catalyses the reaction L-cysteine(in) = L-cysteine(out). In terms of biological role, exporter of O-acetylserine (OAS) and cysteine. This chain is Cysteine/O-acetylserine efflux protein (eamB), found in Escherichia coli O139:H28 (strain E24377A / ETEC).